The chain runs to 225 residues: ATP-dependent dethiobiotin synthetase BioD (225 aa).

ATP is bound at residue 13–18; that stretch reads NVGKTL. T17 serves as a coordination point for Mg(2+). Residue K38 is part of the active site. Residue T42 coordinates substrate. Residues D55, 116–119, 176–177, and 205–207 contribute to the ATP site; these read EGAG, NH, and PWL. D55 and E116 together coordinate Mg(2+).

Belongs to the dethiobiotin synthetase family. In terms of assembly, homodimer. Requires Mg(2+) as cofactor.

The protein localises to the cytoplasm. It catalyses the reaction (7R,8S)-7,8-diammoniononanoate + CO2 + ATP = (4R,5S)-dethiobiotin + ADP + phosphate + 3 H(+). The protein operates within cofactor biosynthesis; biotin biosynthesis; biotin from 7,8-diaminononanoate: step 1/2. Catalyzes a mechanistically unusual reaction, the ATP-dependent insertion of CO2 between the N7 and N8 nitrogen atoms of 7,8-diaminopelargonic acid (DAPA, also called 7,8-diammoniononanoate) to form a ureido ring. This Baumannia cicadellinicola subsp. Homalodisca coagulata protein is ATP-dependent dethiobiotin synthetase BioD.